The sequence spans 184 residues: MPNTQSPYTAFAALLSSNGHPVSPAELHGLLIGRSCAGAGFEADAWLADAAGVLENEPEDNVRAALIGLQEMVKAELTGEDIAIVLLLPSDETPLTERATALGQWCQGFIAGFGLNAGGKDLSTDAKEVLQDLVAISQVQEALEESEDGESDYMEVMEYLRVAPLLLYTELAAPAAPAPKPSLH.

It belongs to the UPF0149 family.

The chain is UPF0149 protein PputW619_5026 from Pseudomonas putida (strain W619).